Here is a 278-residue protein sequence, read N- to C-terminus: Thiazole synthase (278 aa).

K109 serves as the catalytic Schiff-base intermediate with DXP. 1-deoxy-D-xylulose 5-phosphate contacts are provided by residues G170, A197–G198, and N219–T220.

Belongs to the ThiG family. In terms of assembly, homotetramer. Forms heterodimers with either ThiH or ThiS.

Its subcellular location is the cytoplasm. It carries out the reaction [ThiS sulfur-carrier protein]-C-terminal-Gly-aminoethanethioate + 2-iminoacetate + 1-deoxy-D-xylulose 5-phosphate = [ThiS sulfur-carrier protein]-C-terminal Gly-Gly + 2-[(2R,5Z)-2-carboxy-4-methylthiazol-5(2H)-ylidene]ethyl phosphate + 2 H2O + H(+). Its pathway is cofactor biosynthesis; thiamine diphosphate biosynthesis. Its function is as follows. Catalyzes the rearrangement of 1-deoxy-D-xylulose 5-phosphate (DXP) to produce the thiazole phosphate moiety of thiamine. Sulfur is provided by the thiocarboxylate moiety of the carrier protein ThiS. In vitro, sulfur can be provided by H(2)S. In Cupriavidus necator (strain ATCC 17699 / DSM 428 / KCTC 22496 / NCIMB 10442 / H16 / Stanier 337) (Ralstonia eutropha), this protein is Thiazole synthase.